The sequence spans 310 residues: Homoserine O-acetyltransferase (310 aa).

The Acyl-thioester intermediate role is filled by Cys142. Lys163 and Ser192 together coordinate substrate. His235 functions as the Proton acceptor in the catalytic mechanism. Glu237 is an active-site residue. Arg249 is a substrate binding site.

This sequence belongs to the MetA family.

The protein localises to the cytoplasm. The catalysed reaction is L-homoserine + acetyl-CoA = O-acetyl-L-homoserine + CoA. It functions in the pathway amino-acid biosynthesis; L-methionine biosynthesis via de novo pathway; O-acetyl-L-homoserine from L-homoserine: step 1/1. Transfers an acetyl group from acetyl-CoA to L-homoserine, forming acetyl-L-homoserine. The chain is Homoserine O-acetyltransferase from Agathobacter rectalis (strain ATCC 33656 / DSM 3377 / JCM 17463 / KCTC 5835 / VPI 0990) (Eubacterium rectale).